A 244-amino-acid polypeptide reads, in one-letter code: Sugar fermentation stimulation protein homolog (244 aa).

It belongs to the SfsA family.

This is Sugar fermentation stimulation protein homolog from Dinoroseobacter shibae (strain DSM 16493 / NCIMB 14021 / DFL 12).